The sequence spans 323 residues: Protein SopB (323 aa).

Residues M1–T20 form a disordered region. A compositionally biased stretch (polar residues) spans T11 to T20. A DNA-binding region (H-T-H motif) is located at residues S180–T199.

It belongs to the ParB family.

Functionally, control of plasmid partitioning; required to recognize the cis-acting. Binds specifically with the DNA segment containing the sopC region. SopB is trans-acting. The protein is Protein SopB (sopB) of Escherichia coli O157:H7.